We begin with the raw amino-acid sequence, 207 residues long: Fibroblast growth factor 18 (207 aa).

The first 27 residues, 1–27 (MYSAPSTCTCLCLHFLLLCFQVQVLAA), serve as a signal peptide directing secretion. Residue N39 is glycosylated (N-linked (GlcNAc...) asparagine). A disulfide bridge connects residues C109 and C127. Residue N137 is glycosylated (N-linked (GlcNAc...) asparagine).

Belongs to the heparin-binding growth factors family. Interacts with FGFR3 and FGFR4.

The protein resides in the secreted. Plays an important role in the regulation of cell proliferation, cell differentiation and cell migration. Required for normal ossification and bone development. Stimulates hepatic and intestinal proliferation. This is Fibroblast growth factor 18 (FGF18) from Bos taurus (Bovine).